We begin with the raw amino-acid sequence, 512 residues long: Maturase K (512 aa).

The protein belongs to the intron maturase 2 family. MatK subfamily.

The protein localises to the plastid. It is found in the chloroplast. Functionally, usually encoded in the trnK tRNA gene intron. Probably assists in splicing its own and other chloroplast group II introns. In Soldanella alpina (Alpine snowbell), this protein is Maturase K.